The following is a 455-amino-acid chain: Adhesin YadA (455 aa).

Positions 1–25 are cleaved as a signal peptide; that stretch reads MTKDFKISVSAALISALFSSPYAFA. The segment at 26-363 is surface exposed passenger domain; sequence DDYDGIPNLT…KKAIRESNQY (338 aa). Positions 209–243 form a coiled coil; that stretch reads VNVAQLKKEIEKTQENTNKRSAELLANANAYADNK. Positions 364–402 are outer membrane translocation of the passenger domain; it reads TDHKFRQLDNRLDKLDTRVDKGLASSAALNSLFQPYGVG. Transmembrane regions (beta stranded) follow at residues 402–412, 416–427, 434–440, and 444–455; these read GKVNFTAGVGG, SQALAIGSGYRV, KAGVAYA, and DVMYNASFNIEW. The interval 403 to 455 is translocator domain; it reads KVNFTAGVGGYRSSQALAIGSGYRVNENVALKAGVAYAGSSDVMYNASFNIEW.

The protein belongs to the autotransporter-2 (AT-2) (TC 1.B.40) family. Homotrimer; in gels migrates as monomers, dimers and homotrimers. Does not form trimers with distantly related EibA from E.coli; coexpression was lethal and one of the genes is eliminated in vivo. If the full translocator domain (368-455) is exchanged with that of EibA ('299-392'), will form heterotrimers with EibA and vice-versa.

The protein localises to the cell surface. It is found in the cell outer membrane. Collagen-binding outer membrane protein forming a fibrillar matrix on the bacterial cell surface. Promotes initial attachment and invasion of eukaryotic cells. Also protects the bacteria by being responsible for agglutination, serum resistance, complement inactivation and phagocytosis resistance. The chain is Adhesin YadA (yadA) from Yersinia enterocolitica.